We begin with the raw amino-acid sequence, 429 residues long: Acetylornithine aminotransferase (429 aa).

Pyridoxal 5'-phosphate is bound by residues 126 to 127 (GA) and Phe160. Arg163 contacts N(2)-acetyl-L-ornithine. Residue 251–254 (DEVQ) participates in pyridoxal 5'-phosphate binding. Lys280 is subject to N6-(pyridoxal phosphate)lysine. Ser307 provides a ligand contact to N(2)-acetyl-L-ornithine. Position 308 (Thr308) interacts with pyridoxal 5'-phosphate.

It belongs to the class-III pyridoxal-phosphate-dependent aminotransferase family. ArgD subfamily. Homodimer. Requires pyridoxal 5'-phosphate as cofactor.

The protein localises to the cytoplasm. The enzyme catalyses N(2)-acetyl-L-ornithine + 2-oxoglutarate = N-acetyl-L-glutamate 5-semialdehyde + L-glutamate. It functions in the pathway amino-acid biosynthesis; L-arginine biosynthesis; N(2)-acetyl-L-ornithine from L-glutamate: step 4/4. Its activity is regulated as follows. N-acetylornithine aminotransferase activity is stimulated by the addition of Mg(2+), Ca(2+) or Mn(2+), and inhibited by the addition of Zn(2+), Cu(2+), Co(2+) or Ni(2+). Catalyzes the reversible conversion of N-acetylornithine to N-acetylglutamate-5-semialdehyde. In vitro, also shows very low ornithine aminotransferase (OAT) and gamma-aminobutyrate aminotransferase (GABA-AT) activity, catalyzing the conversion of ornithine (Orn) to glutamate-5-semialdehyde and of gamma-aminobutyric acid (GABA) to succinate semialdehyde. It has been shown to function as a GABA-AT and contributes to closing the tricarboxylic acid cycle of Synechocystis sp. PCC6803 via the GABA shunt. However, the catalytic efficiency toward N-acetylornithine is 2500-fold and 10700-fold higher than that toward ornithine and gamma-aminobutyrate, respectively, indicating that the protein mainly functions as an N-acetylornithine aminotransferase. The polypeptide is Acetylornithine aminotransferase (Synechocystis sp. (strain ATCC 27184 / PCC 6803 / Kazusa)).